A 443-amino-acid polypeptide reads, in one-letter code: MIKNDTIAAIATPPGEGSIAIVRVSGPEAIQITDKIFSGPVPSFASHTAHLGTASHHGRQIDQVLLLIMRAPRSFTGEDVVELQCHGGYFSCSQILEALVSEGARPALPGEFSQRAFLNGKIDLIQAEAIQNLIAADNLDAFHIAQNHFQGHFSQRVQKISSLIIESLAFIEVLADFPEEEQPDMEVPEKRLNEALVIIEDLISSFDEGQRLAQGTSIVLAGHPNAGKSSLLNALTNRNRAIVTDIPGTTRDILEESWTLQGKRIRLIDSAGQRETDNPVEQEGIERAISAMKQAEGILWVMDATQPPPPLPEILFQKPSLLLWNKSDLASPPRIDTSLPQLAISAKTGDGILELKQFIQKWIQKQQLGKNSKVFLVSARHHTILQQIRTYLLSAKEGLLSQLPPELVALELRQALQTTGNLSGSEINETILGEIFSRFCIGK.

Arg-23, Glu-82, and Lys-121 together coordinate (6S)-5-formyl-5,6,7,8-tetrahydrofolate. The 150-residue stretch at 215-364 (GTSIVLAGHP…LKQFIQKWIQ (150 aa)) folds into the TrmE-type G domain. Residue Asn-225 coordinates K(+). GTP contacts are provided by residues 225–230 (NAGKSS), 244–250 (TDIPGTT), and 269–272 (DSAG). A Mg(2+)-binding site is contributed by Ser-229. Thr-244, Ile-246, and Thr-249 together coordinate K(+). Thr-250 provides a ligand contact to Mg(2+). (6S)-5-formyl-5,6,7,8-tetrahydrofolate is bound at residue Lys-443.

This sequence belongs to the TRAFAC class TrmE-Era-EngA-EngB-Septin-like GTPase superfamily. TrmE GTPase family. As to quaternary structure, homodimer. Heterotetramer of two MnmE and two MnmG subunits. K(+) is required as a cofactor.

Its subcellular location is the cytoplasm. Functionally, exhibits a very high intrinsic GTPase hydrolysis rate. Involved in the addition of a carboxymethylaminomethyl (cmnm) group at the wobble position (U34) of certain tRNAs, forming tRNA-cmnm(5)s(2)U34. The sequence is that of tRNA modification GTPase MnmE from Chlamydia felis (strain Fe/C-56) (Chlamydophila felis).